The sequence spans 88 residues: FXYD domain-containing ion transport regulator 3 (88 aa).

The segment at residues 1–20 is a signal peptide (not cleaved); sequence MQEVVLSLLVLLAGLPTLDA. At 1–38 the chain is on the extracellular side; it reads MQEVVLSLLVLLAGLPTLDANDPENKNDPFYYDWYSLR. Residues 39-59 form a helical membrane-spanning segment; sequence VGGLICAGILCALGIIVLMSG. Residues 60–88 are Cytoplasmic-facing; that stretch reads KCKCKFRQKPSHRPGEGPPLITPGSAHNC. Residues 67–88 are disordered; sequence QKPSHRPGEGPPLITPGSAHNC.

This sequence belongs to the FXYD family. Regulatory subunit of the sodium/potassium-transporting ATPase which is composed of a catalytic alpha subunit, a non-catalytic beta subunit and an additional regulatory subunit. Interacts with catalytic alpha subunit ATP1A1. Also interacts with non-catalytic beta subunit ATP1B1. Interacts with the ATP1A1-ATP1B1, ATP1A2-ATP1B1 and ATP1A3-ATP1B1 NKA isozymes. Post-translationally, glutathionylated. In terms of tissue distribution, expressed at high levels in heart, skeletal muscle and liver with low levels of expression in breast, brain, lung, stomach and colon. In the gastric gland, mainly expressed in the mucus cells forming the upper part of the gland and is absent from the parietal cells.

The protein localises to the cell membrane. Functionally, associates with and regulates the activity of the sodium/potassium-transporting ATPase (NKA) which transports Na(+) out of the cell and K(+) into the cell. Reduces glutathionylation of the NKA beta-1 subunit ATP1B1, thus reversing glutathionylation-mediated inhibition of ATP1B1. Induces a hyperpolarization-activated chloride current when expressed in Xenopus oocytes. This is FXYD domain-containing ion transport regulator 3 (Fxyd3) from Mus musculus (Mouse).